Reading from the N-terminus, the 159-residue chain is ATP synthase subunit b 2 (159 aa).

A helical membrane pass occupies residues M1–M21.

Belongs to the ATPase B chain family. In terms of assembly, F-type ATPases have 2 components, F(1) - the catalytic core - and F(0) - the membrane proton channel. F(1) has five subunits: alpha(3), beta(3), gamma(1), delta(1), epsilon(1). F(0) has three main subunits: a(1), b(2) and c(10-14). The alpha and beta chains form an alternating ring which encloses part of the gamma chain. F(1) is attached to F(0) by a central stalk formed by the gamma and epsilon chains, while a peripheral stalk is formed by the delta and b chains.

The protein resides in the cell inner membrane. Functionally, f(1)F(0) ATP synthase produces ATP from ADP in the presence of a proton or sodium gradient. F-type ATPases consist of two structural domains, F(1) containing the extramembraneous catalytic core and F(0) containing the membrane proton channel, linked together by a central stalk and a peripheral stalk. During catalysis, ATP synthesis in the catalytic domain of F(1) is coupled via a rotary mechanism of the central stalk subunits to proton translocation. Its function is as follows. Component of the F(0) channel, it forms part of the peripheral stalk, linking F(1) to F(0). The sequence is that of ATP synthase subunit b 2 from Chelativorans sp. (strain BNC1).